The primary structure comprises 256 residues: Acetoacetate decarboxylase 3 (256 aa).

Residue K110 is the Schiff-base intermediate with acetoacetate of the active site.

It belongs to the ADC family.

It carries out the reaction acetoacetate + H(+) = acetone + CO2. Catalyzes the conversion of acetoacetate to acetone and carbon dioxide. The protein is Acetoacetate decarboxylase 3 of Mesorhizobium japonicum (strain LMG 29417 / CECT 9101 / MAFF 303099) (Mesorhizobium loti (strain MAFF 303099)).